A 99-amino-acid chain; its full sequence is NADH dehydrogenase [ubiquinone] 1 alpha subcomplex subunit 2 (99 aa).

A2 carries the N-acetylalanine modification. A disulfide bond links C24 and C58. K64 carries the post-translational modification N6-acetyllysine; alternate. K64 is modified (N6-succinyllysine; alternate). At K75 the chain carries N6-acetyllysine.

Belongs to the complex I NDUFA2 subunit family. As to quaternary structure, complex I is composed of 45 different subunits.

It localises to the mitochondrion inner membrane. Accessory subunit of the mitochondrial membrane respiratory chain NADH dehydrogenase (Complex I), that is believed not to be involved in catalysis. Complex I functions in the transfer of electrons from NADH to the respiratory chain. The immediate electron acceptor for the enzyme is believed to be ubiquinone. This is NADH dehydrogenase [ubiquinone] 1 alpha subcomplex subunit 2 (NDUFA2) from Macaca fascicularis (Crab-eating macaque).